Reading from the N-terminus, the 494-residue chain is Solute carrier family 2, facilitated glucose transporter member 3 (494 aa).

Residues 1 to 10 (MGTTKVTPYL) lie on the Cytoplasmic side of the membrane. A helical transmembrane segment spans residues 11–32 (IFATSVAAIGSFQFGYNTGVIN). Topologically, residues 33 to 64 (APEMIIRDFLNYTLDEKLDEPPSRLLLTNLWS) are extracellular. The N-linked (GlcNAc...) asparagine glycan is linked to Asn-43. A helical transmembrane segment spans residues 65-84 (LSVAIFSVGGMIGSFSVGLF). Residues 85-89 (NRFGR) lie on the Cytoplasmic side of the membrane. The helical transmembrane segment at 90–110 (RNSMLIVNLLAVIGGCLMGFC) threads the bilayer. Over 111-117 (KISESVE) the chain is Extracellular. A helical transmembrane segment spans residues 118–141 (MLILGRLVIGVFCGLCTGFVPMYI). Residues 142-152 (GEISPTALRGA) are Cytoplasmic-facing. A helical transmembrane segment spans residues 153 to 173 (FGTLNQLGIVIGILVAQIFGL). Residue Gln-158 coordinates D-glucose. Residues 174 to 182 (EIILGSEVL) are Extracellular-facing. A helical membrane pass occupies residues 183-203 (WPVLLGFTIIPAILQSAALPF). Residues 204-268 (CPESPRFLLI…LFRAPSYRQP (65 aa)) lie on the Cytoplasmic side of the membrane. Thr-231 carries the phosphothreonine modification. The helical transmembrane segment at 269–289 (IIISIVLQLSQQLSGINAVFY) threads the bilayer. Residues 276–278 (QLS) are important for selectivity against fructose. D-glucose contacts are provided by residues 279–280 (QQ) and Asn-285. At 290-303 (YSTGIFKDAGVKEP) the chain is on the extracellular side. Residues 304–324 (IYATIGAGVVNTIFTIVSVFL) traverse the membrane as a helical segment. Asn-314 lines the D-glucose pocket. The Cytoplasmic segment spans residues 325-330 (VERAGR). Residues 331–351 (RTLHLIGLGGMALCSVLMTVS) form a helical membrane-spanning segment. The Extracellular portion of the chain corresponds to 352–362 (LLLKDKYDTMS). A helical transmembrane segment spans residues 363–388 (LVCIAAILIYVAFFEIGPGPIPWFIV). D-glucose-binding residues include Glu-377 and Trp-385. Over 389–398 (AELFSQGPRP) the chain is Cytoplasmic. Residues 399-419 (AAMAVAGCSNWTSNFLVGLLF) traverse the membrane as a helical segment. Over 420–428 (PSAAYYLGA) the chain is Extracellular. A helical transmembrane segment spans residues 429–449 (YVFVIFAVFLVAFFIFTFFKV). Topologically, residues 450–494 (PETRGRTFEDITRAFEGQAAEANKLGKGPTMEMNSIQPIETTTHV) are cytoplasmic. At Ser-484 the chain carries Phosphoserine. The residue at position 491 (Thr-491) is a Phosphothreonine.

It belongs to the major facilitator superfamily. Sugar transporter (TC 2.A.1.1) family. Glucose transporter subfamily. Interacts with SMIM43; the interaction may promote SLC2A3-mediated glucose transport to meet the energy needs of mesendoderm differentiation. As to expression, detected in stomach, placenta, lung and brain.

The protein localises to the cell membrane. It localises to the perikaryon. Its subcellular location is the cell projection. The enzyme catalyses D-glucose(out) = D-glucose(in). The catalysed reaction is D-galactose(in) = D-galactose(out). With respect to regulation, deoxyglucose transport is inhibited by D-glucose, D-galactose and maltose. Galactose transport is inhibited by D-glucose and maltose. In terms of biological role, facilitative glucose transporter. Can also mediate the uptake of various other monosaccharides across the cell membrane. Mediates the uptake of glucose, 2-deoxyglucose, galactose, mannose, xylose and fucose, and probably also dehydroascorbate. Does not mediate fructose transport. Required for mesendoderm differentiation. This is Solute carrier family 2, facilitated glucose transporter member 3 from Oryctolagus cuniculus (Rabbit).